We begin with the raw amino-acid sequence, 257 residues long: UPF0246 protein YaaA (257 aa).

It belongs to the UPF0246 family.

The chain is UPF0246 protein YaaA from Salmonella typhi.